Consider the following 565-residue polypeptide: Estrogen receptor gamma (565 aa).

The segment at 1-168 (MAVASSPEKD…TSGGKTDLHY (168 aa)) is modulating. NR C4-type zinc fingers lie at residues 169–189 (CAVC…CEGC) and 205–229 (CPAT…LRKC). Positions 169–234 (CAVCHDYASG…RLRKCYEVGM (66 aa)) form a DNA-binding region, nuclear receptor. The tract at residues 235–285 (TKCGMRKERGNYRSPQMRRMTRLTSQGRTDSSSVLTGSAVVSLNAPQPSAL) is hinge. An NR LBD domain is found at 286-516 (TSEQLIERLM…DLLLEMLDAH (231 aa)). The tract at residues 522–565 (RLPRRSPEQEPEDQADAPAPPHSSGSGPSYTWTPSSSEGAGEPQ) is disordered.

The protein belongs to the nuclear hormone receptor family. NR3 subfamily. As to quaternary structure, homodimer. Abundant in the ovary and testes, barely detectable in the brain and muscle and undetectable in the liver.

It localises to the nucleus. Its function is as follows. The steroid hormones and their receptors are involved in the regulation of eukaryotic gene expression and affect cellular proliferation and differentiation in target tissues. The protein is Estrogen receptor gamma (esr3) of Micropogonias undulatus (Atlantic croaker).